We begin with the raw amino-acid sequence, 500 residues long: Glycerol kinase (500 aa).

ADP is bound at residue threonine 11. ATP is bound by residues threonine 11, threonine 12, and serine 13. Threonine 11 contributes to the sn-glycerol 3-phosphate binding site. ADP is bound at residue arginine 15. Arginine 81, glutamate 82, tyrosine 133, and aspartate 242 together coordinate sn-glycerol 3-phosphate. The glycerol site is built by arginine 81, glutamate 82, tyrosine 133, aspartate 242, and glutamine 243. The ADP site is built by threonine 264 and glycine 307. ATP contacts are provided by threonine 264, glycine 307, glutamine 311, and glycine 411. Glycine 411 serves as a coordination point for ADP.

Belongs to the FGGY kinase family.

It catalyses the reaction glycerol + ATP = sn-glycerol 3-phosphate + ADP + H(+). It functions in the pathway polyol metabolism; glycerol degradation via glycerol kinase pathway; sn-glycerol 3-phosphate from glycerol: step 1/1. Its activity is regulated as follows. Inhibited by fructose 1,6-bisphosphate (FBP). Its function is as follows. Key enzyme in the regulation of glycerol uptake and metabolism. Catalyzes the phosphorylation of glycerol to yield sn-glycerol 3-phosphate. The polypeptide is Glycerol kinase (Bradyrhizobium sp. (strain ORS 278)).